We begin with the raw amino-acid sequence, 44 residues long: Photosystem I reaction center subunit IX (44 aa).

The helical transmembrane segment at Tyr7–Ile27 threads the bilayer.

It belongs to the PsaJ family.

The protein resides in the plastid. It is found in the chloroplast thylakoid membrane. Its function is as follows. May help in the organization of the PsaE and PsaF subunits. The chain is Photosystem I reaction center subunit IX from Cicer arietinum (Chickpea).